Here is a 222-residue protein sequence, read N- to C-terminus: Ribonuclease 3 (222 aa).

The RNase III domain occupies 3–125; that stretch reads SQSVAKKLNH…LFGAIYLDAG (123 aa). Position 38 (glutamate 38) interacts with Mg(2+). The active site involves aspartate 42. Positions 111 and 114 each coordinate Mg(2+). Glutamate 114 is a catalytic residue. The region spanning 152 to 222 is the DRBM domain; the sequence is DAKTRLQEWL…AEKALKELLA (71 aa).

This sequence belongs to the ribonuclease III family. As to quaternary structure, homodimer. The cofactor is Mg(2+).

The protein resides in the cytoplasm. The catalysed reaction is Endonucleolytic cleavage to 5'-phosphomonoester.. Its function is as follows. Digests double-stranded RNA. Involved in the processing of primary rRNA transcript to yield the immediate precursors to the large and small rRNAs (23S and 16S). Processes some mRNAs, and tRNAs when they are encoded in the rRNA operon. Processes pre-crRNA and tracrRNA of type II CRISPR loci if present in the organism. In Dechloromonas aromatica (strain RCB), this protein is Ribonuclease 3.